A 456-amino-acid chain; its full sequence is Adenylosuccinate synthetase isozyme 2 (456 aa).

Positions 1-24 are disordered; sequence MAFAETNPAASSLPNGDCGRPRAR. GTP-binding positions include 39–45 and 67–69; these read GDEGKGK and GHT. Aspartate 40 (proton acceptor) is an active-site residue. Mg(2+)-binding residues include aspartate 40 and glycine 67. Substrate is bound at residue aspartate 40. IMP-binding positions include 40-43, 65-68, threonine 162, arginine 176, asparagine 255, threonine 270, and arginine 334; these read DEGK and NAGH. The active-site Proton donor is the histidine 68. 330 to 336 is a substrate binding site; sequence VTTGRKR. GTP is bound by residues arginine 336, 362–364, and 444–447; these read KLD and GVGK.

It belongs to the adenylosuccinate synthetase family. As to quaternary structure, homodimer. Requires Mg(2+) as cofactor. As to expression, widely expressed.

It localises to the cytoplasm. The protein resides in the mitochondrion. The catalysed reaction is IMP + L-aspartate + GTP = N(6)-(1,2-dicarboxyethyl)-AMP + GDP + phosphate + 2 H(+). It functions in the pathway purine metabolism; AMP biosynthesis via de novo pathway; AMP from IMP: step 1/2. Inhibited competitively by AMP and IMP and non-competitively by fructose 1,6-bisphosphate. In terms of biological role, plays an important role in the de novo pathway and in the salvage pathway of purine nucleotide biosynthesis. Catalyzes the first committed step in the biosynthesis of AMP from IMP. This chain is Adenylosuccinate synthetase isozyme 2, found in Sus scrofa (Pig).